A 65-amino-acid chain; its full sequence is Photosystem II reaction center protein J (65 aa).

Residues 1 to 17 (MSTKLKGPDGRIPDRLP) show a composition bias toward basic and acidic residues. The segment at 1 to 21 (MSTKLKGPDGRIPDRLPDGSP) is disordered. The chain crosses the membrane as a helical span at residues 36-56 (LWLVATVGGMAVLSVLGLFFF).

This sequence belongs to the PsbJ family. PSII is composed of 1 copy each of membrane proteins PsbA, PsbB, PsbC, PsbD, PsbE, PsbF, PsbH, PsbI, PsbJ, PsbK, PsbL, PsbM, PsbT, PsbX, PsbY, Psb30/Ycf12, peripheral proteins PsbO, CyanoQ (PsbQ), PsbU, PsbV and a large number of cofactors. It forms dimeric complexes.

Its subcellular location is the cellular thylakoid membrane. In terms of biological role, one of the components of the core complex of photosystem II (PSII). PSII is a light-driven water:plastoquinone oxidoreductase that uses light energy to abstract electrons from H(2)O, generating O(2) and a proton gradient subsequently used for ATP formation. It consists of a core antenna complex that captures photons, and an electron transfer chain that converts photonic excitation into a charge separation. This chain is Photosystem II reaction center protein J, found in Prochlorococcus marinus (strain MIT 9313).